Reading from the N-terminus, the 229-residue chain is MTDAKMKKKRTTPFLYLASIVFLPWWISLFFKKSLESWVTNWLNISQSEPFLNDIQEKSLIEKFIELEELLLLDEMIKECPKLDLQKFRIGIHKETIQLMNMYNDDRIHTILHFSTNIISFVILSVCSILGNEELVILNSWIKEFLYNLSDTLKAFCLLALTDFLFGFHTISAWELLIGSVVHNDQMRSLLVCLFPSVLHTIYYFWTFNYLNCVSPSLVVLYDSLVDVD.

A run of 4 helical transmembrane segments spans residues T11–F31, I118–L138, L158–I178, and L190–Y210.

It belongs to the CemA family.

The protein resides in the plastid. The protein localises to the chloroplast inner membrane. It carries out the reaction K(+)(in) + H(+)(out) = K(+)(out) + H(+)(in). Functionally, contributes to K(+)/H(+) antiport activity by supporting proton efflux to control proton extrusion and homeostasis in chloroplasts in a light-dependent manner to modulate photosynthesis. Prevents excessive induction of non-photochemical quenching (NPQ) under continuous-light conditions. Indirectly promotes efficient inorganic carbon uptake into chloroplasts. This chain is Potassium/proton antiporter CemA, found in Pelargonium hortorum (Common geranium).